We begin with the raw amino-acid sequence, 540 residues long: 2-isopropylmalate synthase (540 aa).

Positions 8-269 (VLIFDTTLRD…YFNPFFGRAE (262 aa)) constitute a Pyruvate carboxyltransferase domain. Mn(2+) is bound by residues D17, H208, H210, and N244. The tract at residues 408-540 (QLKLVQVSCG…ATPLDASPTL (133 aa)) is regulatory domain.

The protein belongs to the alpha-IPM synthase/homocitrate synthase family. LeuA type 1 subfamily. Homodimer. Mn(2+) serves as cofactor.

The protein resides in the cytoplasm. The catalysed reaction is 3-methyl-2-oxobutanoate + acetyl-CoA + H2O = (2S)-2-isopropylmalate + CoA + H(+). Its pathway is amino-acid biosynthesis; L-leucine biosynthesis; L-leucine from 3-methyl-2-oxobutanoate: step 1/4. Catalyzes the condensation of the acetyl group of acetyl-CoA with 3-methyl-2-oxobutanoate (2-ketoisovalerate) to form 3-carboxy-3-hydroxy-4-methylpentanoate (2-isopropylmalate). This chain is 2-isopropylmalate synthase, found in Synechococcus sp. (strain WH7803).